The chain runs to 137 residues: Peptide methionine sulfoxide reductase MsrB (137 aa).

In terms of domain architecture, MsrB spans 7–129; that stretch reads PGELKNGLSE…NSASLSFTDE (123 aa). 4 residues coordinate Zn(2+): Cys-46, Cys-49, Cys-95, and Cys-98. The active-site Nucleophile is Cys-118.

The protein belongs to the MsrB Met sulfoxide reductase family. It depends on Zn(2+) as a cofactor.

It catalyses the reaction L-methionyl-[protein] + [thioredoxin]-disulfide + H2O = L-methionyl-(R)-S-oxide-[protein] + [thioredoxin]-dithiol. The sequence is that of Peptide methionine sulfoxide reductase MsrB from Klebsiella pneumoniae (strain 342).